The following is a 520-amino-acid chain: UvrABC system protein C (520 aa).

Residues 11 to 89 (EEPGCYQFKD…IKKYQPKYNI (79 aa)) enclose the GIY-YIG domain. Residues 195–230 (QDLIYDLRKEMETFAAAEEYEKALVIRDRIAAIENL) form the UVR domain.

The protein belongs to the UvrC family. In terms of assembly, interacts with UvrB in an incision complex.

The protein resides in the cytoplasm. In terms of biological role, the UvrABC repair system catalyzes the recognition and processing of DNA lesions. UvrC both incises the 5' and 3' sides of the lesion. The N-terminal half is responsible for the 3' incision and the C-terminal half is responsible for the 5' incision. The polypeptide is UvrABC system protein C (Methanospirillum hungatei JF-1 (strain ATCC 27890 / DSM 864 / NBRC 100397 / JF-1)).